Consider the following 335-residue polypeptide: Histidinol-phosphatase (335 aa).

Belongs to the PHP hydrolase family. HisK subfamily.

It catalyses the reaction L-histidinol phosphate + H2O = L-histidinol + phosphate. The protein operates within amino-acid biosynthesis; L-histidine biosynthesis; L-histidine from 5-phospho-alpha-D-ribose 1-diphosphate: step 8/9. This chain is Histidinol-phosphatase (HIS2), found in Saccharomyces cerevisiae (strain ATCC 204508 / S288c) (Baker's yeast).